Consider the following 183-residue polypeptide: Glutathione-regulated potassium-efflux system ancillary protein KefG (183 aa).

The protein belongs to the NAD(P)H dehydrogenase (quinone) family. KefG subfamily. Interacts with KefB.

It localises to the cell inner membrane. The catalysed reaction is a quinone + NADH + H(+) = a quinol + NAD(+). It catalyses the reaction a quinone + NADPH + H(+) = a quinol + NADP(+). Functionally, regulatory subunit of a potassium efflux system that confers protection against electrophiles. Required for full activity of KefB. The protein is Glutathione-regulated potassium-efflux system ancillary protein KefG of Salmonella paratyphi C (strain RKS4594).